The sequence spans 439 residues: Serine/threonine-protein kinase 2 (439 aa).

Residues 87 to 439 (NDDFYHISTG…IFSDWINGGN (353 aa)) form the Protein kinase domain. Residues 93 to 101 (ISTGGYGIV) and Lys-117 contribute to the ATP site. The Proton acceptor role is filled by Asp-307.

It belongs to the protein kinase superfamily. Ser/Thr protein kinase family. Post-translationally, phosphorylated in vivo. Autophosphorylated in vitro.

Its subcellular location is the host endoplasmic reticulum. It localises to the host endoplasmic reticulum-Golgi intermediate compartment. It catalyses the reaction L-seryl-[protein] + ATP = O-phospho-L-seryl-[protein] + ADP + H(+). The enzyme catalyses L-threonyl-[protein] + ATP = O-phospho-L-threonyl-[protein] + ADP + H(+). Its function is as follows. Essential serine-protein kinase involved in the early stage of virion morphogenesis. In Vaccinia virus (strain Tian Tan) (VACV), this protein is Serine/threonine-protein kinase 2 (OPG054).